A 631-amino-acid polypeptide reads, in one-letter code: 1-deoxy-D-xylulose-5-phosphate synthase (631 aa).

Thiamine diphosphate contacts are provided by residues histidine 73 and 114–116; that span reads GHS. Aspartate 145 provides a ligand contact to Mg(2+). Thiamine diphosphate is bound by residues 146–147, asparagine 174, tyrosine 285, and glutamate 366; that span reads GA. Residue asparagine 174 participates in Mg(2+) binding.

It belongs to the transketolase family. DXPS subfamily. In terms of assembly, homodimer. Mg(2+) is required as a cofactor. Thiamine diphosphate serves as cofactor.

The enzyme catalyses D-glyceraldehyde 3-phosphate + pyruvate + H(+) = 1-deoxy-D-xylulose 5-phosphate + CO2. The protein operates within metabolic intermediate biosynthesis; 1-deoxy-D-xylulose 5-phosphate biosynthesis; 1-deoxy-D-xylulose 5-phosphate from D-glyceraldehyde 3-phosphate and pyruvate: step 1/1. Catalyzes the acyloin condensation reaction between C atoms 2 and 3 of pyruvate and glyceraldehyde 3-phosphate to yield 1-deoxy-D-xylulose-5-phosphate (DXP). The protein is 1-deoxy-D-xylulose-5-phosphate synthase of Desulfitobacterium hafniense (strain Y51).